The chain runs to 154 residues: Cyanate hydratase (154 aa).

Residues Arg-100, Glu-103, and Ser-126 contribute to the active site.

This sequence belongs to the cyanase family.

The catalysed reaction is cyanate + hydrogencarbonate + 3 H(+) = NH4(+) + 2 CO2. Catalyzes the reaction of cyanate with bicarbonate to produce ammonia and carbon dioxide. This Aspergillus clavatus (strain ATCC 1007 / CBS 513.65 / DSM 816 / NCTC 3887 / NRRL 1 / QM 1276 / 107) protein is Cyanate hydratase.